The primary structure comprises 48 residues: Small, acid-soluble spore protein P (48 aa).

A compositionally biased stretch (basic and acidic residues) spans 1 to 12; sequence MTNKNTSKDMHK. The interval 1-48 is disordered; it reads MTNKNTSKDMHKNAPKGHNPGQPEPLSGSKKVKNRNHTRQKHNTSHDM. Residues 30–48 show a composition bias toward basic residues; the sequence is KKVKNRNHTRQKHNTSHDM.

Belongs to the SspP family.

Its subcellular location is the spore core. In Bacillus velezensis (strain DSM 23117 / BGSC 10A6 / LMG 26770 / FZB42) (Bacillus amyloliquefaciens subsp. plantarum), this protein is Small, acid-soluble spore protein P.